The following is a 1447-amino-acid chain: MENSLRCVWVPKLAFVLFGASLFSAHLQVTGFQIKAFTALRFLSEPSDAVTMRGGNVLLDCSAESDRGVPVIKWKKDGIHLALGMDERKQQLSNGSLLIQNILHSRHHKPDEGLYQCEASLGDSGSIISRTAKVAVAGPLRFLSQTESVTAFMGDTVLLKCEVIGEPMPTIHWQKNQQDLTPIPGDSRVVVLPSGALQISRLQPGDIGIYRCSARNPASSRTGNEAEVRILSDPGLHRQLYFLQRPSNVVAIEGKDAVLECCVSGYPPPSFTWLRGEEVIQLRSKKYSLLGGSNLLISNVTDDDSGMYTCVVTYKNENISASAELTVLVPPWFLNHPSNLYAYESMDIEFECTVSGKPVPTVNWMKNGDVVIPSDYFQIVGGSNLRILGVVKSDEGFYQCVAENEAGNAQTSAQLIVPKPAIPSSSVLPSAPRDVVPVLVSSRFVRLSWRPPAEAKGNIQTFTVFFSREGDNRERALNTTQPGSLQLTVGNLKPEAMYTFRVVAYNEWGPGESSQPIKVATQPELQVPGPVENLQAVSTSPTSILITWEPPAYANGPVQGYRLFCTEVSTGKEQNIEVDGLSYKLEGLKKFTEYSLRFLAYNRYGPGVSTDDITVVTLSDVPSAPPQNVSLEVVNSRSIKVSWLPPPSGTQNGFITGYKIRHRKTTRRGEMETLEPNNLWYLFTGLEKGSQYSFQVSAMTVNGTGPPSNWYTAETPENDLDESQVPDQPSSLHVRPQTNCIIMSWTPPLNPNIVVRGYIIGYGVGSPYAETVRVDSKQRYYSIERLESSSHYVISLKAFNNAGEGVPLYESATTRSITDPTDPVDYYPLLDDFPTSVPDLSTPMLPPVGVQAVALTHDAVRVSWADNSVPKNQKTSEVRLYTVRWRTSFSASAKYKSEDTTSLSYTATGLKPNTMYEFSVMVTKNRRSSTWSMTAHATTYEAAPTSAPKDLTVITREGKPRAVIVSWQPPLEANGKITAYILFYTLDKNIPIDDWIMETISGDRLTHQIMDLNLDTMYYFRIQARNSKGVGPLSDPILFRTLKVEHPDKMANDQGRHGDGGYWPVDTNLIDRSTLNEPPIGQMHPPHGSVTPQKNSNLLVIIVVTVGVITVLVVVIVAVICTRRSSAQQRKKRATHSAGKRKGSQKDLRPPDLWIHHEEMEMKNIEKPSGTDPAGRDSPIQSCQDLTPVSHSQSETQLGSKSTSHSGQDTEEAGSSMSTLERSLAARRAPRAKLMIPMDAQSNNPAVVSAIPVPTLESAQYPGILPSPTCGYPHPQFTLRPVPFPTLSVDRGFGAGRSQSVSEGPTTQQPPMLPPSQPEHSSSEEAPSRTIPTACVRPTHPLRSFANPLLPPPMSAIEPKVPYTPLLSQPGPTLPKTHVKTASLGLAGKARSPLLPVSVPTAPEVSEESHKPTEDSANVYEQDDLSEQMASLEGLMKQLNAITGSAF.

The first 25 residues, Met-1–Ala-25, serve as a signal peptide directing secretion. 4 Ig-like C2-type domains span residues His-26 to Ala-135, Pro-139 to Arg-229, Pro-234 to Thr-326, and Pro-331 to Ile-416. Topologically, residues His-26 to Asn-1097 are extracellular. 3 cysteine pairs are disulfide-bonded: Cys-61/Cys-117, Cys-161/Cys-212, and Cys-261/Cys-310. Residue Asn-94 is glycosylated (N-linked (GlcNAc...) asparagine). 2 N-linked (GlcNAc...) asparagine glycosylation sites follow: Asn-299 and Asn-318. Cys-352 and Cys-400 are joined by a disulfide. 6 consecutive Fibronectin type-III domains span residues Ala-431–Glu-524, Pro-530–Asp-620, Pro-625–Asn-718, Gln-728–Thr-821, Pro-846–Ala-942, and Ala-947–Val-1044. The N-linked (GlcNAc...) asparagine glycan is linked to Asn-478. N-linked (GlcNAc...) asparagine glycosylation is found at Asn-628 and Asn-702. A helical membrane pass occupies residues Leu-1098–Thr-1122. Residues Arg-1123 to Phe-1447 lie on the Cytoplasmic side of the membrane. 2 disordered regions span residues Ser-1126–Asp-1152 and Ile-1165–Arg-1222. Positions Gln-1129–Gly-1143 are enriched in basic residues. Residue Ser-1178 is modified to Phosphoserine; by MAPK1. The segment covering Pro-1179–Glu-1221 has biased composition (polar residues). Thr-1187 bears the Phosphothreonine; by MAPK1 mark. Ser-1267 is modified (phosphoserine; by MAPK1). 2 disordered regions span residues Ser-1288–Thr-1330 and Leu-1394–Val-1419. Over residues Arg-1297–Pro-1310 the composition is skewed to polar residues. The segment at Leu-1432–Leu-1439 is interaction with MYO10.

Belongs to the immunoglobulin superfamily. DCC family. In terms of assembly, interacts with the cytoplasmic part of UNC5A, UNC5B, UNC5C and probably UNC5D. Interacts with DSCAM. Interacts with PTK2/FAK1 and MAPK1. Interacts with NTN1. Interacts with MYO10. Interacts with CBLN4; this interaction can be competed by NTN1. Interacts with SIAH1 and SIAH2. Post-translationally, ubiquitinated; mediated by SIAH1 or SIAH2 and leading to its subsequent proteasomal degradation. In terms of tissue distribution, found in axons of the central and peripheral nervous system and in differentiated cell types of the intestine. Not expressed in colorectal tumor cells that lost their capacity to differentiate into mucus producing cells.

The protein resides in the membrane. Its function is as follows. Receptor for netrin required for axon guidance. Mediates axon attraction of neuronal growth cones in the developing nervous system upon ligand binding. Its association with UNC5 proteins may trigger signaling for axon repulsion. It also acts as a dependence receptor required for apoptosis induction when not associated with netrin ligand. Implicated as a tumor suppressor gene. This is Netrin receptor DCC (DCC) from Homo sapiens (Human).